We begin with the raw amino-acid sequence, 1405 residues long: DNA-directed RNA polymerase subunit beta' (1405 aa).

Residues cysteine 70, cysteine 72, cysteine 85, and cysteine 88 each coordinate Zn(2+). Mg(2+) contacts are provided by aspartate 460, aspartate 462, and aspartate 464. Residues cysteine 815, cysteine 889, cysteine 896, and cysteine 899 each contribute to the Zn(2+) site. The disordered stretch occupies residues 1363–1388; sequence LAHHAERRRRREDPESTANPSAFDVE.

Belongs to the RNA polymerase beta' chain family. In terms of assembly, the RNAP catalytic core consists of 2 alpha, 1 beta, 1 beta' and 1 omega subunit. When a sigma factor is associated with the core the holoenzyme is formed, which can initiate transcription. The cofactor is Mg(2+). It depends on Zn(2+) as a cofactor.

It carries out the reaction RNA(n) + a ribonucleoside 5'-triphosphate = RNA(n+1) + diphosphate. Functionally, DNA-dependent RNA polymerase catalyzes the transcription of DNA into RNA using the four ribonucleoside triphosphates as substrates. In Chromohalobacter salexigens (strain ATCC BAA-138 / DSM 3043 / CIP 106854 / NCIMB 13768 / 1H11), this protein is DNA-directed RNA polymerase subunit beta'.